We begin with the raw amino-acid sequence, 446 residues long: uncharacterized protein (446 aa).

Residues Ser-393 and Ser-397 each carry the phosphoserine modification. The segment at 411–431 (LSSTERRDLDRVRDKQKKQDQ) is disordered.

This sequence belongs to the IFRD family.

It is found in the cytoplasm. This is an uncharacterized protein from Schizosaccharomyces pombe (strain 972 / ATCC 24843) (Fission yeast).